The following is a 350-amino-acid chain: N(4)-bis(aminopropyl)spermidine synthase (350 aa).

The protein belongs to the branched-chain polyamine synthase family.

Its subcellular location is the cytoplasm. The catalysed reaction is 2 S-adenosyl 3-(methylsulfanyl)propylamine + spermidine = N(4)-bis(aminopropyl)spermidine + 2 S-methyl-5'-thioadenosine + 2 H(+). The protein operates within amine and polyamine biosynthesis. Functionally, involved in the biosynthesis of branched-chain polyamines, which support the growth of thermophiles under high-temperature conditions. Catalyzes the sequential condensation of spermidine with the aminopropyl groups of decarboxylated S-adenosylmethionines to produce N(4)-bis(aminopropyl)spermidine via N(4)-aminopropylspermidine. The chain is N(4)-bis(aminopropyl)spermidine synthase from Methanocaldococcus jannaschii (strain ATCC 43067 / DSM 2661 / JAL-1 / JCM 10045 / NBRC 100440) (Methanococcus jannaschii).